A 300-amino-acid chain; its full sequence is Tyrosine recombinase XerC (300 aa).

The region spanning 4-90 is the Core-binding (CB) domain; that stretch reads VALSLDVSRF…ALRSFFDWLV (87 aa). A Tyr recombinase domain is found at 111-290; it reads HLPKNIDVDD…DFQHLASVYD (180 aa). Active-site residues include Arg-150, Lys-174, His-242, Arg-245, and His-268. The active-site O-(3'-phospho-DNA)-tyrosine intermediate is the Tyr-277.

It belongs to the 'phage' integrase family. XerC subfamily. Forms a cyclic heterotetrameric complex composed of two molecules of XerC and two molecules of XerD, in which XerC interacts with XerD via its C-terminal region, XerD interacts with XerC via its C-terminal region and so on.

Its subcellular location is the cytoplasm. FtsK may regulate the catalytic switch between XerC and XerD in the heterotetrameric complex during the two steps of the recombination process. Functionally, site-specific tyrosine recombinase, which acts by catalyzing the cutting and rejoining of the recombining DNA molecules. Binds cooperatively to specific DNA consensus sequences that are separated from XerD binding sites by a short central region, forming the heterotetrameric XerC-XerD complex that recombines DNA substrates. The complex is essential to convert dimers of the bacterial chromosome into monomers to permit their segregation at cell division. It also contributes to the segregational stability of plasmids. In the complex XerC specifically exchanges the top DNA strands. This is Tyrosine recombinase XerC from Salmonella typhi.